Reading from the N-terminus, the 350-residue chain is Small ribosomal subunit biogenesis GTPase RsgA (350 aa).

Residues 1–17 (MSKNKLSKGQQRRVNAN) show a composition bias toward polar residues. The disordered stretch occupies residues 1–24 (MSKNKLSKGQQRRVNANHQRRLKT). The 170-residue stretch at 104-273 (TSVLTRPDFY…VIDSPGVREF (170 aa)) folds into the CP-type G domain. Residues 160–163 (NKID) and 214–222 (GQSGVGKSS) contribute to the GTP site. Residues Cys-297, Cys-302, His-304, and Cys-310 each coordinate Zn(2+).

The protein belongs to the TRAFAC class YlqF/YawG GTPase family. RsgA subfamily. Monomer. Associates with 30S ribosomal subunit, binds 16S rRNA. It depends on Zn(2+) as a cofactor.

The protein resides in the cytoplasm. In terms of biological role, one of several proteins that assist in the late maturation steps of the functional core of the 30S ribosomal subunit. Helps release RbfA from mature subunits. May play a role in the assembly of ribosomal proteins into the subunit. Circularly permuted GTPase that catalyzes slow GTP hydrolysis, GTPase activity is stimulated by the 30S ribosomal subunit. In Salmonella schwarzengrund (strain CVM19633), this protein is Small ribosomal subunit biogenesis GTPase RsgA.